The chain runs to 257 residues: Acetylglutamate kinase (257 aa).

Residues 43–44, Arg65, and Asn157 contribute to the substrate site; that span reads GG. Residues 180-185 and 208-210 contribute to the ATP site; these read DVSGIL and IIT.

It belongs to the acetylglutamate kinase family. ArgB subfamily. As to quaternary structure, homodimer.

The protein localises to the cytoplasm. The enzyme catalyses N-acetyl-L-glutamate + ATP = N-acetyl-L-glutamyl 5-phosphate + ADP. The protein operates within amino-acid biosynthesis; L-arginine biosynthesis; N(2)-acetyl-L-ornithine from L-glutamate: step 2/4. Functionally, catalyzes the ATP-dependent phosphorylation of N-acetyl-L-glutamate. This Salmonella schwarzengrund (strain CVM19633) protein is Acetylglutamate kinase.